The primary structure comprises 170 residues: uncharacterized protein (170 aa).

This is an uncharacterized protein from Ureaplasma parvum serovar 3 (strain ATCC 700970).